The following is a 94-amino-acid chain: Late cornified envelope protein 3C (94 aa).

The segment covering 1–10 (MSCQQNQQQC) has biased composition (low complexity). 2 disordered regions span residues 1–35 (MSCQ…PPSS) and 65–94 (CRRQ…GGCC). Over residues 11–34 (QPPPSCPSPKCPPKSPAQCLPPPS) the composition is skewed to pro residues. Over residues 78 to 94 (GQQGGGSCRGHGSGGCC) the composition is skewed to gly residues.

This sequence belongs to the LCE family. In terms of assembly, interacts with CYSRT1; the interaction is direct. In terms of tissue distribution, skin-specific. Expression was readily detected in adult trunk skin, adult arm skin, fetal skin, penal skin, vulva, esophagus and tongue. Not expressed in the cervix, rectum, lung, colon, or placenta.

In terms of biological role, a structural component of the cornified envelope of the stratum corneum involved in innate cutaneous host defense. Possesses defensin-like antimicrobial activity against a broad spectrum of Gram-positive and Gram-negative bacteria, both aerobic and anaerobic species. Upon inflammation, may regulate skin barrier repair by shaping cutaneous microbiota composition and immune response to bacterial antigens. This chain is Late cornified envelope protein 3C, found in Homo sapiens (Human).